The chain runs to 395 residues: Phosphopentomutase (395 aa).

Positions 16, 289, 294, 330, 331, and 342 each coordinate Mn(2+).

The protein belongs to the phosphopentomutase family. Mn(2+) serves as cofactor.

The protein localises to the cytoplasm. It carries out the reaction 2-deoxy-alpha-D-ribose 1-phosphate = 2-deoxy-D-ribose 5-phosphate. The catalysed reaction is alpha-D-ribose 1-phosphate = D-ribose 5-phosphate. It functions in the pathway carbohydrate degradation; 2-deoxy-D-ribose 1-phosphate degradation; D-glyceraldehyde 3-phosphate and acetaldehyde from 2-deoxy-alpha-D-ribose 1-phosphate: step 1/2. Its function is as follows. Isomerase that catalyzes the conversion of deoxy-ribose 1-phosphate (dRib-1-P) and ribose 1-phosphate (Rib-1-P) to deoxy-ribose 5-phosphate (dRib-5-P) and ribose 5-phosphate (Rib-5-P), respectively. This Geobacillus kaustophilus (strain HTA426) protein is Phosphopentomutase.